The primary structure comprises 377 residues: Transmembrane 6 superfamily member 2 (377 aa).

9 consecutive transmembrane segments (helical) span residues 10 to 30 (IAAL…VSAL), 34 to 54 (LWVA…VYSL), 63 to 83 (PLYA…IIAL), 111 to 131 (FICY…AGAI), 140 to 160 (FGLY…TGNI), 170 to 190 (PAFF…MKVF), 219 to 239 (LALV…GLVV), 269 to 289 (MLMY…ALTF), and 332 to 352 (TWGC…LLAY). 2 EXPERA domains span residues 61-186 (YDPL…CWAG) and 217-351 (ADLA…HLLA).

The protein belongs to the TM6SF family. Substantial expression in liver and intestine, whereas all other tissues analyzed show low levels.

Its subcellular location is the endoplasmic reticulum membrane. It is found in the endoplasmic reticulum-Golgi intermediate compartment membrane. In terms of biological role, regulator of liver fat metabolism influencing triglyceride secretion and hepatic lipid droplet content. May function as sterol isomerase. The polypeptide is Transmembrane 6 superfamily member 2 (TM6SF2) (Homo sapiens (Human)).